Consider the following 199-residue polypeptide: Protein ASYMMETRIC LEAVES 2 (199 aa).

Residues S8–L109 form the LOB domain.

It belongs to the LOB domain-containing protein family. Homo- and heterodimer with AS1. Interacts with AS1. Part of the AS1 repressor complex composed of AS1, LBD6/AS2 and HDA6. Interacts with LFR. Expressed in young shoots, roots, stems, leaves, flowers and adaxial domains of cotyledonary and leaves primordia.

It is found in the nucleus. Negative regulator of cell proliferation in the adaxial side of leaves. Regulates the formation of a symmetric lamina and the establishment of venation. Positively regulates LATERAL ORGAN BOUNDARIES (LOB) within the shoot apex, and the class III HD-ZIP genes REV, PHB, and PHV. Interacts directly with ASYMMETRIC LEAVES 1 (AS1) to repress the knox homeobox genes KNAT1, KNAT2, and KNAT6 and the abaxial determinants ARF3, KAN2 and YAB5. May act in parallel with the RDR6-SGS3-AGO7 pathway, an endogenous RNA silencing pathway, to regulate the leaf morphogenesis. Required for the binding of AS1 to the KNOX genes. Involved in leaf polarity establishment by functioning cooperatively with RH10 or RID2 to repress abaxial genes ARF3, ARF4, KAN1, KAN2, YAB1 and YAB5, and the knox homeobox genes KNAT1, KNAT2, KNAT6, and STM to promote adaxial development in leaf primordia at shoot apical meristems at high temperatures. The polypeptide is Protein ASYMMETRIC LEAVES 2 (Arabidopsis thaliana (Mouse-ear cress)).